The sequence spans 427 residues: Adenylosuccinate synthetase (427 aa).

Residues 12–18 (GDEGKGK) and 40–42 (GHT) each bind GTP. Aspartate 13 (proton acceptor) is an active-site residue. Residues aspartate 13 and glycine 40 each contribute to the Mg(2+) site. Residues 13 to 16 (DEGK), 38 to 41 (NAGH), threonine 128, arginine 142, glutamine 223, threonine 238, and arginine 302 each bind IMP. The active-site Proton donor is the histidine 41. 298 to 304 (TTTGRPR) provides a ligand contact to substrate. Residues arginine 304, 330 to 332 (SID), and 412 to 414 (SVG) contribute to the GTP site.

Belongs to the adenylosuccinate synthetase family. In terms of assembly, homodimer. Mg(2+) is required as a cofactor.

The protein localises to the cytoplasm. It carries out the reaction IMP + L-aspartate + GTP = N(6)-(1,2-dicarboxyethyl)-AMP + GDP + phosphate + 2 H(+). Its pathway is purine metabolism; AMP biosynthesis via de novo pathway; AMP from IMP: step 1/2. Plays an important role in the de novo pathway of purine nucleotide biosynthesis. Catalyzes the first committed step in the biosynthesis of AMP from IMP. This is Adenylosuccinate synthetase from Staphylococcus epidermidis (strain ATCC 12228 / FDA PCI 1200).